The chain runs to 415 residues: MGIKFAHLADVHLGYEQFNRSQRAEEFAKAFEDAIKICVDEKVDFIVIAGDLFNSSRPSPGTIKTAVKILQIPRDNNIPVFAIEGNHDRTQRGPSILHLLEDLGLLYVLGVRDEKVENEYLTSEKTKAGWLVKGMYKDVEIHGMKYMSAAWFEGNIELFKSMFRPEGDAILVLHQGVREITENNYPNYSSELSLSDLPKGYLYYALGHIHKRFELTYDDAPVVYPGSLERWDFGDYSLKLTWNGFQFKEEVGVDKGFYIVEDFKPRFIRINARDFIDVHIKGHSENEIKKAVKLAVPKIPRNSYVRFNIRWKRPVDVDWIKSIVNAEYVRVNPIIIKEERGPDGKDLDVKKFFTELEWKIIELASEKEYEYYLNQIIDLLASEEGKVEAKIDAKREEKKFVRPKNPGDIMAWVKG.

The Mn(2+) site is built by Asp-10, His-12, Asp-51, and Asn-86. His-87 serves as the catalytic Proton donor. Mn(2+) is bound by residues His-174, His-208, and His-210.

Belongs to the MRE11/RAD32 family. As to quaternary structure, homodimer. Forms a heterotetramer composed of two Mre11 subunits and two Rad50 subunits. Requires Mn(2+) as cofactor.

With respect to regulation, nuclease activity is regulated by Rad50. Part of the Rad50/Mre11 complex, which is involved in the early steps of DNA double-strand break (DSB) repair. The complex may facilitate opening of the processed DNA ends to aid in the recruitment of HerA and NurA. Mre11 binds to DSB ends and has both double-stranded 3'-5' exonuclease activity and single-stranded endonuclease activity. In Pyrococcus abyssi (strain GE5 / Orsay), this protein is DNA double-strand break repair protein Mre11.